Reading from the N-terminus, the 445-residue chain is Xylose isomerase (445 aa).

Catalysis depends on residues His99 and Asp102. 7 residues coordinate Mg(2+): Glu230, Glu266, His269, Asp294, Asp305, Asp307, and Asp337.

This sequence belongs to the xylose isomerase family. Homotetramer. Mg(2+) is required as a cofactor.

It is found in the cytoplasm. It carries out the reaction alpha-D-xylose = alpha-D-xylulofuranose. This Geobacillus kaustophilus (strain HTA426) protein is Xylose isomerase.